Reading from the N-terminus, the 311-residue chain is 4-diphosphocytidyl-2-C-methyl-D-erythritol kinase (311 aa).

Lys-16 is an active-site residue. Pro-100–Ser-110 serves as a coordination point for ATP. Asp-142 is a catalytic residue.

Belongs to the GHMP kinase family. IspE subfamily.

It carries out the reaction 4-CDP-2-C-methyl-D-erythritol + ATP = 4-CDP-2-C-methyl-D-erythritol 2-phosphate + ADP + H(+). Its pathway is isoprenoid biosynthesis; isopentenyl diphosphate biosynthesis via DXP pathway; isopentenyl diphosphate from 1-deoxy-D-xylulose 5-phosphate: step 3/6. In terms of biological role, catalyzes the phosphorylation of the position 2 hydroxy group of 4-diphosphocytidyl-2C-methyl-D-erythritol. The polypeptide is 4-diphosphocytidyl-2-C-methyl-D-erythritol kinase (Prochlorococcus marinus (strain AS9601)).